Reading from the N-terminus, the 397-residue chain is Protein RecA (397 aa).

The segment at 1–23 (MALETKPAKDPAAEDKHELDPKR) is disordered. 83–90 (GPESSGKT) contacts ATP.

Belongs to the RecA family.

The protein localises to the cytoplasm. Its function is as follows. Can catalyze the hydrolysis of ATP in the presence of single-stranded DNA, the ATP-dependent uptake of single-stranded DNA by duplex DNA, and the ATP-dependent hybridization of homologous single-stranded DNAs. It interacts with LexA causing its activation and leading to its autocatalytic cleavage. This is Protein RecA from Bifidobacterium longum (strain NCC 2705).